We begin with the raw amino-acid sequence, 37 residues long: Large ribosomal subunit protein bL36 (37 aa).

Belongs to the bacterial ribosomal protein bL36 family.

In Syntrophotalea carbinolica (strain DSM 2380 / NBRC 103641 / GraBd1) (Pelobacter carbinolicus), this protein is Large ribosomal subunit protein bL36.